The chain runs to 342 residues: S-adenosylmethionine:tRNA ribosyltransferase-isomerase (342 aa).

It belongs to the QueA family. Monomer.

It is found in the cytoplasm. The catalysed reaction is 7-aminomethyl-7-carbaguanosine(34) in tRNA + S-adenosyl-L-methionine = epoxyqueuosine(34) in tRNA + adenine + L-methionine + 2 H(+). It functions in the pathway tRNA modification; tRNA-queuosine biosynthesis. Functionally, transfers and isomerizes the ribose moiety from AdoMet to the 7-aminomethyl group of 7-deazaguanine (preQ1-tRNA) to give epoxyqueuosine (oQ-tRNA). This Oceanobacillus iheyensis (strain DSM 14371 / CIP 107618 / JCM 11309 / KCTC 3954 / HTE831) protein is S-adenosylmethionine:tRNA ribosyltransferase-isomerase.